Here is a 213-residue protein sequence, read N- to C-terminus: N-(5'-phosphoribosyl)anthranilate isomerase (213 aa).

Belongs to the TrpF family.

The catalysed reaction is N-(5-phospho-beta-D-ribosyl)anthranilate = 1-(2-carboxyphenylamino)-1-deoxy-D-ribulose 5-phosphate. Its pathway is amino-acid biosynthesis; L-tryptophan biosynthesis; L-tryptophan from chorismate: step 3/5. This Rhodopseudomonas palustris (strain TIE-1) protein is N-(5'-phosphoribosyl)anthranilate isomerase.